Reading from the N-terminus, the 340-residue chain is Spermidine synthase 2 (340 aa).

A disordered region spans residues 1–41; sequence MSSTQEASVTDLPVKRPREAEEDNNGGAMETENGGGEIKEP. Ser-2 is subject to N-acetylserine. Residues 49-286 enclose the PABS domain; that stretch reads PGWFSEISPM…GVIGFMLCSS (238 aa). S-adenosyl 3-(methylsulfanyl)propylamine is bound at residue Gln-80. Putrescine is bound at residue Tyr-110. S-adenosyl 3-(methylsulfanyl)propylamine-binding positions include Gln-111, Asp-135, Glu-155, 186-187, and Asp-205; that span reads DG. Catalysis depends on Asp-205, which acts as the Proton acceptor. Residues 205–208 and Tyr-274 each bind putrescine; that span reads DSSD.

It belongs to the spermidine/spermine synthase family. In terms of assembly, heterodimer. Component of a multiprotein complex. Interacts with SPMS and SPDSYN1.

The enzyme catalyses S-adenosyl 3-(methylsulfanyl)propylamine + putrescine = S-methyl-5'-thioadenosine + spermidine + H(+). The protein operates within amine and polyamine biosynthesis; spermidine biosynthesis; spermidine from putrescine: step 1/1. This Arabidopsis thaliana (Mouse-ear cress) protein is Spermidine synthase 2 (SPDSYN2).